The primary structure comprises 608 residues: Bifunctional lycopene cyclase/phytoene synthase (608 aa).

The tract at residues 1 to 240 (MSILTYLEFH…LVFATCAIDR (240 aa)) is lycopene beta-cyclase. A run of 7 helical transmembrane segments spans residues 3–23 (ILTYLEFHLYYTLPVLAALCW), 37–56 (YKFLMLMAASTASIWDNYIV), 80–97 (YMFFIIMTLMTVAFSNFV), 117–137 (LLVRLVPVSALLAITYHAWHL), 150–170 (ILWYACPVLAILWLGAGEYIL), 175–195 (AVLLSIVIPSVYLCWADIVAI), and 218–238 (VEECLFFTLINTVLVFATCAI). Residues 247–608 (LYKSSVQNQN…ARKIKSFFVD (362 aa)) are phytoene synthase.

In the N-terminal section; belongs to the lycopene beta-cyclase family. The protein in the C-terminal section; belongs to the phytoene/squalene synthase family.

It is found in the membrane. The catalysed reaction is all-trans-lycopene = gamma-carotene. It catalyses the reaction gamma-carotene = all-trans-beta-carotene. The enzyme catalyses 2 (2E,6E,10E)-geranylgeranyl diphosphate = 15-cis-phytoene + 2 diphosphate. The protein operates within carotenoid biosynthesis; beta-carotene biosynthesis. It functions in the pathway carotenoid biosynthesis; phytoene biosynthesis; all-trans-phytoene from geranylgeranyl diphosphate: step 1/1. Bifunctional enzyme that catalyzes the reactions from geranylgeranyl diphosphate to phytoene (phytoene synthase) and lycopene to beta-carotene via the intermediate gamma-carotene (lycopene cyclase). This chain is Bifunctional lycopene cyclase/phytoene synthase, found in Blakeslea trispora (Choanephora trispora).